Consider the following 389-residue polypeptide: Basigin (389 aa).

Positions methionine 1 to alanine 21 are cleaved as a signal peptide. The Extracellular portion of the chain corresponds to alanine 22–arginine 325. The Ig-like domain occupies glycine 37–threonine 120. 3 cysteine pairs are disulfide-bonded: cysteine 44-cysteine 108, cysteine 157-cysteine 203, and cysteine 242-cysteine 305. The Ig-like C2-type domain maps to glutamate 138–glycine 219. Asparagine 160, asparagine 270, and asparagine 306 each carry an N-linked (GlcNAc...) asparagine glycan. Residues proline 221 to serine 319 form the Ig-like V-type domain. A helical transmembrane segment spans residues methionine 326–tyrosine 349. Topologically, residues glutamate 350–threonine 389 are cytoplasmic. The tract at residues aspartate 356–threonine 389 is disordered. Phosphothreonine is present on threonine 358. Serine 372 is modified (phosphoserine).

Interacts with NXNL1. Interacts with SLC2A1 and SLC16A1/GLUT1. Interacts with XKR8; promoting its localization at the cell membrane. In terms of assembly, interacts with ATP1B2, MAG and L1CAM. Interacts with SLC16A7. Interacts with VEGFA, KDR/VEGFR2, PPIA/CYPA, SLC1A3, SLC16A11 and SLC16A12. Interacts with PPIL2; regulates BSG transport to the cell membrane. Interacts with SLC16A1; interaction mediates SLC16A1 targeting to the plasma membrane. Interacts with SLC16A3; interaction mediates SLC16A3 targeting to the plasma membrane. As to quaternary structure, interacts with SLC16A6; this interaction mediates targeting to the plasma membrane. Post-translationally, N-glycosylated. In terms of processing, N-glycosylated. During spermatogenesis, probably deglycosylated during epididymal transit. As to expression, retina-specific. Expressed in both rods and cones (at protein level). Testis and caput, corpus and cauda epididymides (at protein level). Expressed in the brain, lung, liver, kidney, heart, spleen, uterus, retina and skeletal muscle.

Its subcellular location is the cell membrane. The protein resides in the photoreceptor inner segment. It localises to the cell projection. It is found in the cilium. The protein localises to the photoreceptor outer segment. Its subcellular location is the endoplasmic reticulum membrane. The protein resides in the basolateral cell membrane. Its function is as follows. Essential for normal retinal maturation and development. Acts as a retinal cell surface receptor for NXNL1 and plays an important role in NXNL1-mediated survival of retinal cone photoreceptors. In association with glucose transporter SLC16A1/GLUT1 and NXNL1, promotes retinal cone survival by enhancing aerobic glycolysis and accelerating the entry of glucose into photoreceptors. Functionally, signaling receptor for cyclophilins, essential for PPIA/CYPA and PPIB/CYPB-dependent signaling related to chemotaxis and adhesion of immune cells. Plays an important role in targeting the monocarboxylate transporters SLC16A1, SLC16A3 and SLC16A8 to the plasma membrane. Acts as a coreceptor for vascular endothelial growth factor receptor 2 (KDR/VEGFR2) in endothelial cells enhancing its VEGFA-mediated activation and downstream signaling. Promotes angiogenesis through EPAS1/HIF2A-mediated up-regulation of VEGFA and KDR/VEGFR2 in endothelial cells. Plays an important role in spermatogenesis; mediates interactions between germ cells and Sertoli cell and is essential for the development/differentiation of germ cells to round spermatids. The protein is Basigin (Bsg) of Mus musculus (Mouse).